Reading from the N-terminus, the 574-residue chain is Glycine--tRNA ligase (574 aa).

The substrate site is built by Arg96 and Glu162. ATP is bound by residues 194–196, 204–209, 327–328, and 450–453; these read RNE, IRLREF, EC, and GIDR. 209–213 lines the substrate pocket; sequence FTQAE. 446–450 contacts substrate; that stretch reads EPSYG.

This sequence belongs to the class-II aminoacyl-tRNA synthetase family.

The protein localises to the cytoplasm. The catalysed reaction is tRNA(Gly) + glycine + ATP = glycyl-tRNA(Gly) + AMP + diphosphate. In terms of biological role, catalyzes the attachment of glycine to tRNA(Gly). The polypeptide is Glycine--tRNA ligase (Methanococcus maripaludis (strain DSM 14266 / JCM 13030 / NBRC 101832 / S2 / LL)).